We begin with the raw amino-acid sequence, 434 residues long: GTPase Der (434 aa).

2 consecutive EngA-type G domains span residues 3–167 (NIVA…PEIE) and 175–350 (PRFA…ESRS). GTP contacts are provided by residues 9–16 (GRPNVGKS), 56–60 (DTGGY), 119–122 (NKVD), 181–188 (GRPNAGKS), 228–232 (DTAGI), and 293–296 (NKWD). Positions 351 to 434 (KKIKTRQFND…VPISIFFRKK (84 aa)) constitute a KH-like domain.

The protein belongs to the TRAFAC class TrmE-Era-EngA-EngB-Septin-like GTPase superfamily. EngA (Der) GTPase family. As to quaternary structure, associates with the 50S ribosomal subunit.

GTPase that plays an essential role in the late steps of ribosome biogenesis. This Christiangramia forsetii (strain DSM 17595 / CGMCC 1.15422 / KT0803) (Gramella forsetii) protein is GTPase Der.